Here is a 281-residue protein sequence, read N- to C-terminus: sn-glycerol-3-phosphate transport system permease protein UgpE (281 aa).

6 helical membrane passes run 16-36 (LILG…AATL), 85-105 (FSIT…IVWF), 113-133 (FFWM…FPTV), 142-162 (LDSY…TFLF), 202-222 (ALFV…LLII), and 247-267 (WNSV…IVLV). Residues 77-268 (LLNSFVMAFS…IPPVVIVLVM (192 aa)) form the ABC transmembrane type-1 domain.

The protein belongs to the binding-protein-dependent transport system permease family. UgpAE subfamily. In terms of assembly, the complex is composed of two ATP-binding proteins (UgpC), two transmembrane proteins (UgpA and UgpE) and a solute-binding protein (UgpB).

Its subcellular location is the cell inner membrane. Part of the ABC transporter complex UgpBAEC involved in sn-glycerol-3-phosphate (G3P) import. Probably responsible for the translocation of the substrate across the membrane. This chain is sn-glycerol-3-phosphate transport system permease protein UgpE (ugpE), found in Escherichia coli O157:H7.